Here is a 285-residue protein sequence, read N- to C-terminus: ATP phosphoribosyltransferase (285 aa).

It belongs to the ATP phosphoribosyltransferase family. Long subfamily. Mg(2+) serves as cofactor.

Its subcellular location is the cytoplasm. The enzyme catalyses 1-(5-phospho-beta-D-ribosyl)-ATP + diphosphate = 5-phospho-alpha-D-ribose 1-diphosphate + ATP. It functions in the pathway amino-acid biosynthesis; L-histidine biosynthesis; L-histidine from 5-phospho-alpha-D-ribose 1-diphosphate: step 1/9. With respect to regulation, feedback inhibited by histidine. Catalyzes the condensation of ATP and 5-phosphoribose 1-diphosphate to form N'-(5'-phosphoribosyl)-ATP (PR-ATP). Has a crucial role in the pathway because the rate of histidine biosynthesis seems to be controlled primarily by regulation of HisG enzymatic activity. This chain is ATP phosphoribosyltransferase, found in Streptomyces coelicolor (strain ATCC BAA-471 / A3(2) / M145).